The following is a 119-amino-acid chain: Circadian clock oscillator protein KaiB (119 aa).

The protein belongs to the KaiB family. In terms of assembly, may undergo a major conformational rearrangment; in the free state forms homooligomers. When bound to KaiC switches to a monomeric thioredoxin-fold (KaiB(fs)). The active oscillator complex is probably KaiC(6):KaiB(6).

Its function is as follows. Component of the KaiBC clock protein complex, which constitutes the main circadian regulator in cyanobacteria; it may modify the ATPase activity of KaiC. May be a metamorphic protein which reversibly switches between an inactive tetrameric fold and a rare, thioredoxin-like monomeric fold (KaiB(fs)). KaiB(fs) binds phospho-KaiC, and perhaps clock output effectors. This is Circadian clock oscillator protein KaiB from Prochlorococcus marinus (strain MIT 9303).